Consider the following 646-residue polypeptide: Centrosomal protein of 72 kDa (646 aa).

3 LRR repeats span residues Glu-28 to Leu-49, Ala-54 to Val-75, and Ser-76 to His-97. The 40-residue stretch at Asn-110 to His-149 folds into the LRRCT domain. 2 positions are modified to phosphoserine: Ser-117 and Ser-236. 2 disordered regions span residues Ser-300 to Val-342 and Gly-357 to Arg-399. Low complexity predominate over residues Ala-307–Lys-319. Ser-380 carries the phosphoserine modification. Basic and acidic residues predominate over residues Glu-383–Ser-392. Ser-402 carries the post-translational modification Phosphoserine. The stretch at Leu-476 to Ser-622 forms a coiled coil.

The protein belongs to the CEP72 family. As to quaternary structure, interacts with KIZ, PCM1 and CDK5RAP2.

It localises to the cytoplasm. It is found in the cytoskeleton. The protein resides in the microtubule organizing center. Its subcellular location is the centrosome. The protein localises to the centriolar satellite. Its function is as follows. Involved in the recruitment of key centrosomal proteins to the centrosome. Provides centrosomal microtubule-nucleation activity on the gamma-tubulin ring complexes (gamma-TuRCs) and has critical roles in forming a focused bipolar spindle, which is needed for proper tension generation between sister chromatids. Required for localization of KIZ, AKAP9 and gamma-tubulin ring complexes (gamma-TuRCs). Involved in centriole duplication. Required for CDK5RAP22, CEP152, WDR62 and CEP63 centrosomal localization and promotes the centrosomal localization of CDK2. This is Centrosomal protein of 72 kDa (Cep72) from Mus musculus (Mouse).